A 281-amino-acid polypeptide reads, in one-letter code: 4-hydroxy-3-methylbut-2-enyl diphosphate reductase (281 aa).

Cys12 serves as a coordination point for [4Fe-4S] cluster. The (2E)-4-hydroxy-3-methylbut-2-enyl diphosphate site is built by His41 and His74. Residues His41 and His74 each coordinate dimethylallyl diphosphate. Isopentenyl diphosphate is bound by residues His41 and His74. [4Fe-4S] cluster is bound at residue Cys96. His124 contributes to the (2E)-4-hydroxy-3-methylbut-2-enyl diphosphate binding site. His124 lines the dimethylallyl diphosphate pocket. His124 lines the isopentenyl diphosphate pocket. Glu126 acts as the Proton donor in catalysis. Residue Thr164 participates in (2E)-4-hydroxy-3-methylbut-2-enyl diphosphate binding. Cys193 is a binding site for [4Fe-4S] cluster. Positions 221, 223, and 265 each coordinate (2E)-4-hydroxy-3-methylbut-2-enyl diphosphate. Ser221, Asn223, and Ser265 together coordinate dimethylallyl diphosphate. Residues Ser221, Asn223, and Ser265 each coordinate isopentenyl diphosphate.

This sequence belongs to the IspH family. The cofactor is [4Fe-4S] cluster.

It catalyses the reaction isopentenyl diphosphate + 2 oxidized [2Fe-2S]-[ferredoxin] + H2O = (2E)-4-hydroxy-3-methylbut-2-enyl diphosphate + 2 reduced [2Fe-2S]-[ferredoxin] + 2 H(+). The enzyme catalyses dimethylallyl diphosphate + 2 oxidized [2Fe-2S]-[ferredoxin] + H2O = (2E)-4-hydroxy-3-methylbut-2-enyl diphosphate + 2 reduced [2Fe-2S]-[ferredoxin] + 2 H(+). Its pathway is isoprenoid biosynthesis; dimethylallyl diphosphate biosynthesis; dimethylallyl diphosphate from (2E)-4-hydroxy-3-methylbutenyl diphosphate: step 1/1. It functions in the pathway isoprenoid biosynthesis; isopentenyl diphosphate biosynthesis via DXP pathway; isopentenyl diphosphate from 1-deoxy-D-xylulose 5-phosphate: step 6/6. In terms of biological role, catalyzes the conversion of 1-hydroxy-2-methyl-2-(E)-butenyl 4-diphosphate (HMBPP) into a mixture of isopentenyl diphosphate (IPP) and dimethylallyl diphosphate (DMAPP). Acts in the terminal step of the DOXP/MEP pathway for isoprenoid precursor biosynthesis. The chain is 4-hydroxy-3-methylbut-2-enyl diphosphate reductase from Oleidesulfovibrio alaskensis (strain ATCC BAA-1058 / DSM 17464 / G20) (Desulfovibrio alaskensis).